The following is a 248-amino-acid chain: Inner membrane protein pE248R (248 aa).

Glycine 2 is lipidated: N-myristoyl glycine; by host. Residues 2–199 (GGSTSKNSFK…ADAISAVFKN (198 aa)) are Cytoplasmic-facing. A helical transmembrane segment spans residues 200–220 (IMVAAVVIVLIIVGFIAVFYF). The Extracellular segment spans residues 221–248 (LHSRHRHEEEEEAEPLISNKVLKNAAVS).

This sequence belongs to the asfivirus E248R family. In terms of assembly, interacts with A151R.

It localises to the host membrane. Its subcellular location is the virion membrane. Its function is as follows. Essential for viral fusion with host endosomal membrane and core release. In Ornithodoros (relapsing fever ticks), this protein is Inner membrane protein pE248R.